A 162-amino-acid chain; its full sequence is SsrA-binding protein (162 aa).

The protein belongs to the SmpB family.

The protein localises to the cytoplasm. Functionally, required for rescue of stalled ribosomes mediated by trans-translation. Binds to transfer-messenger RNA (tmRNA), required for stable association of tmRNA with ribosomes. tmRNA and SmpB together mimic tRNA shape, replacing the anticodon stem-loop with SmpB. tmRNA is encoded by the ssrA gene; the 2 termini fold to resemble tRNA(Ala) and it encodes a 'tag peptide', a short internal open reading frame. During trans-translation Ala-aminoacylated tmRNA acts like a tRNA, entering the A-site of stalled ribosomes, displacing the stalled mRNA. The ribosome then switches to translate the ORF on the tmRNA; the nascent peptide is terminated with the 'tag peptide' encoded by the tmRNA and targeted for degradation. The ribosome is freed to recommence translation, which seems to be the essential function of trans-translation. The polypeptide is SsrA-binding protein (Colwellia psychrerythraea (strain 34H / ATCC BAA-681) (Vibrio psychroerythus)).